The sequence spans 205 residues: uncharacterized protein (205 aa).

Residues 1–82 enclose the GST N-terminal domain; that stretch reads MIKVYGVPGW…MVLDRRPDLA (82 aa). Residues Val-53 and 66–67 each bind glutathione; that span reads ET. In terms of domain architecture, GST C-terminal spans 86-205; it reads GRAERQLFQR…QEVLKRNEII (120 aa).

The protein belongs to the GST superfamily. Beta family.

This is an uncharacterized protein from Escherichia coli (strain K12).